A 560-amino-acid polypeptide reads, in one-letter code: Aluminum-activated malate transporter 12 (560 aa).

Transmembrane regions (helical) follow at residues 54 to 74 (VGLSLTLVSLLYLMEPLFKGI), 78 to 98 (AIWAVMTVVVVLEFSAGATLC), 104 to 124 (GLGTLIAGSLAFFIEFVANDS), 130 to 150 (AIFIGTAVFIIGAAATYIRFI), 156 to 176 (NYDYGVVIFLLTFNLITVSSY), and 189 to 209 (FYTIAVGCGICLFMSLLVFPI). Residues 386 to 421 (LHRHNNKHQNGSISNNKHHQRNSSNSGKDLNGDVSL) are disordered. Polar residues predominate over residues 407–421 (NSSNSGKDLNGDVSL).

Belongs to the aromatic acid exporter (TC 2.A.85) family. Expressed in roots, stems, leaves, flowers and pollen. Mainly detected in the roots vascular stele and in the leaves guard cells.

Its subcellular location is the cell membrane. Its function is as follows. Malate-sensitive anion transporter permeable to chloride, nitrate, sulfate and malate. Involved in dark-, CO(2)-, abscisic acid- and water-deficient-induced stomatal closure. Belongs to the R-type anion channels. This is Aluminum-activated malate transporter 12 (ALMT12) from Arabidopsis thaliana (Mouse-ear cress).